The chain runs to 251 residues: Leucine-rich repeat and calponin homology domain-containing protein 1 (251 aa).

Positions serine 73–threonine 97 are disordered. Phosphoserine is present on residues serine 87 and serine 91. The segment covering proline 88–threonine 97 has biased composition (polar residues). The residue at position 123 (threonine 123) is a Phosphothreonine. Positions methionine 131–threonine 244 constitute a Calponin-homology (CH) domain.

As to quaternary structure, interacts (via LRR repeats) with unphosphorylated DOCK8 (via DHR-2 domain); the interaction prevents the interaction between DOCK8 and CDC42.

The protein localises to the cytoplasm. Acts as a negative regulator of GTPase CDC42 by sequestering CDC42-guanine exchange factor DOCK8. Probably by preventing CDC42 activation, negatively regulates CD4(+) T-cell migration. The protein is Leucine-rich repeat and calponin homology domain-containing protein 1 of Felis catus (Cat).